The chain runs to 161 residues: Anther-specific protein LAT52 (161 aa).

The first 17 residues, 1-17 (MAKAIVLLSALCILALA), serve as a signal peptide directing secretion. 3 disulfide bridges follow: C35–C106, C38–C147, and C59–C94. N-linked (GlcNAc...) asparagine glycosylation occurs at N61.

It belongs to the Ole e I family. In terms of tissue distribution, expressed in anthers and pollen.

Functionally, may play a role during germination or early tube growth. In Solanum lycopersicum (Tomato), this protein is Anther-specific protein LAT52 (LAT52).